Consider the following 377-residue polypeptide: dTDP-fucopyranose mutase (377 aa).

FAD contacts are provided by residues Ser-12, 31 to 32, Asn-39, 58 to 59, Arg-348, and 355 to 360; these read DD, HI, and LDMDVC.

This sequence belongs to the UDP-galactopyranose/dTDP-fucopyranose mutase family. The cofactor is FAD.

It carries out the reaction dTDP-alpha-D-fucose = dTDP-alpha-D-fucofuranose. It participates in bacterial outer membrane biogenesis; LPS O-antigen biosynthesis. Inhibited by Cu(2+), while other divalent cations such as Ca(2+), Co(2+), Fe(2+) and Mg(2+) have no obvious effects on enzyme activity. Catalyzes the conversion of dTDP-alpha-D-fucopyranose to dTDP-alpha-D-fucofuranose. This is a step in the biosynthesis of D-fucofuranose, a component of E.coli O52 O antigen. The chain is dTDP-fucopyranose mutase (fcf2) from Escherichia coli.